The following is a 126-amino-acid chain: Large ribosomal subunit protein uL22 (126 aa).

The protein belongs to the universal ribosomal protein uL22 family. In terms of assembly, part of the 50S ribosomal subunit.

This protein binds specifically to 23S rRNA; its binding is stimulated by other ribosomal proteins, e.g. L4, L17, and L20. It is important during the early stages of 50S assembly. It makes multiple contacts with different domains of the 23S rRNA in the assembled 50S subunit and ribosome. Its function is as follows. The globular domain of the protein is located near the polypeptide exit tunnel on the outside of the subunit, while an extended beta-hairpin is found that lines the wall of the exit tunnel in the center of the 70S ribosome. This is Large ribosomal subunit protein uL22 from Caulobacter vibrioides (strain ATCC 19089 / CIP 103742 / CB 15) (Caulobacter crescentus).